We begin with the raw amino-acid sequence, 1888 residues long: Eukaryotic translation initiation factor 4G (1888 aa).

Disordered stretches follow at residues 1-259 (MSFN…PTTP), 391-420 (FDNK…TQPL), 449-662 (PLPS…SLQH), 726-761 (VAHS…KNSE), 838-903 (ADVS…DGEV), 961-1042 (AYKR…SGDR), 1083-1138 (TNVS…DPRL), 1331-1356 (GERE…EREE), 1462-1605 (KWQQ…PGDL), and 1639-1691 (RFAG…PSLP). Composition is skewed to polar residues over residues 13 to 36 (GYTQ…SGTH) and 75 to 84 (VNSTDSSNAP). The segment covering 171 to 183 (DEQKRDQARHESF) has biased composition (basic and acidic residues). Pro residues predominate over residues 185 to 195 (PVPPMPIPLAP). Polar residues-rich tracts occupy residues 211-231 (NVGQ…NTGD), 244-259 (ASPN…PTTP), 393-405 (NKQS…TGTS), and 458-475 (NSQP…SQNV). Positions 497-506 (PNREHTRDTH) are enriched in basic and acidic residues. The segment covering 586-596 (IKSSPVISKQF) has biased composition (polar residues). Over residues 603–630 (VSLESQDSSSVQSSLTASSEESELAVAH) the composition is skewed to low complexity. The segment covering 631 to 645 (SEVRRENLLGSDLHK) has biased composition (basic and acidic residues). Over residues 840 to 850 (VSASVSSSSTV) the composition is skewed to low complexity. The span at 869–885 (NMSSNEVLKNVVKSDQP) shows a compositional bias: polar residues. The span at 963–983 (KRPEEKKETVAHSESIERTES) shows a compositional bias: basic and acidic residues. Residues 1048-1093 (KKYSRDFLLKFAEQFLDLPHNFEVTSDIESLMSTHTNVSHHHDRDP) are EIF4E-binding. The segment covering 1109–1124 (RLDRRGSNLVDDDRWS) has biased composition (basic and acidic residues). In terms of domain architecture, MIF4G spans 1239–1462 (QRQLKAILNK…KDAIDLRKNK (224 aa)). 2 stretches are compositionally biased toward basic and acidic residues: residues 1467–1484 (RKVE…DAAQ) and 1661–1674 (KDLR…DRSR). An MI domain is found at 1700–1824 (RLQQLSLTAI…SLREVADLIC (125 aa)).

The protein belongs to the eukaryotic initiation factor 4G family. As to quaternary structure, EIF4F is a multi-subunit complex, the composition of which varies with external and internal environmental conditions. It is composed of at least EIF4A, EIF4E and EIF4G. Interacts directly with eIF4E. In higher plants two isoforms of EIF4F have been identified, named isoform EIF4F and isoform EIF(iso)4F. Isoform EIF4F has subunits p220 and p26, whereas isoform EIF(iso)4F has subunits p82 and p28.

Component of the protein complex eIF4F, which is involved in the recognition of the mRNA cap, ATP-dependent unwinding of 5'-terminal secondary structure and recruitment of mRNA to the ribosome. This is Eukaryotic translation initiation factor 4G from Cucumis melo (Muskmelon).